A 927-amino-acid chain; its full sequence is Clumping factor A (927 aa).

A signal peptide spans 1–39; the sequence is MNMKKKEKHAIRKKSIGVASVLVGTLIGFGLLSSKEADA. Positions 9–20 match the YSIRK-G/S signaling motif motif; that stretch reads HAIRKKSIGVAS. Disordered stretches follow at residues 34-200 and 529-898; these read SKEA…SNKD and FNNG…SEDE. Positions 40-542 are ligand binding A region; the sequence is SENSVTQSDS…SGSGDGIDKP (503 aa). Residues 47–65 show a composition bias toward low complexity; the sequence is SDSASNESKSNDSSSVSAA. Positions 71–105 are enriched in polar residues; sequence TNVSDTKTSSNTNNGETSVAQNPAQQETTQSSSTN. Composition is skewed to low complexity over residues 106-132 and 143-162; these read ATTE…ATTQ and NQTS…SVNS. Residues 163–200 are compositionally biased toward polar residues; it reads PQNSTNAENVSTTQDTSTEATPSNNESAPQSTDASNKD. Acidic residues predominate over residues 547–565; that stretch reads QPDEPGEIEPIPEDSDSDP. Over residues 566–598 the composition is skewed to low complexity; that stretch reads GSDSGSDSNSDSGSDSGSDSTSDSGSDSASDSD. Positions 599 to 855 are enriched in acidic residues; sequence SASDSDSASD…DSDSESDSNS (257 aa). A compositionally biased stretch (low complexity) spans 856–867; it reads DSESVSNNNVVP. The span at 881-890 shows a compositional bias: basic and acidic residues; that stretch reads NEAKDSKEPL. The short motif at 890–894 is the LPXTG sorting signal element; sequence LPDTG. Thr-893 carries the post-translational modification Pentaglycyl murein peptidoglycan amidated threonine. The propeptide at 894-927 is removed by sortase; that stretch reads GSEDEANTSLIWGLLASIGSLLLFRRKKENKDKK.

It belongs to the serine-aspartate repeat-containing protein (SDr) family.

It is found in the secreted. Its subcellular location is the cell wall. Cell surface-associated protein implicated in virulence. Promotes bacterial attachment exclusively to the gamma-chain of human fibrinogen. Induces formation of bacterial clumps, which diminish the ability of group IIA phospholipase A2 to cause bacterial phospholipid hydrolysis and killing. Significantly decreases macrophage phagocytosis possibly thanks to the clumps, clumped bacteria being too large to be phagocytosed. Dominant factor responsible for human platelet aggregation, which may be an important mechanism for initiating infective endocarditis. Enhances spleen cell proliferative response in vitro, contributing significantly to the immunostimulatory activity of S.aureus. This chain is Clumping factor A (clfA), found in Staphylococcus aureus (strain NCTC 8325 / PS 47).